A 139-amino-acid chain; its full sequence is D-ribose pyranase (139 aa).

His20 (proton donor) is an active-site residue. Residues Asp28, His106, and 128–130 (YAN) contribute to the substrate site.

It belongs to the RbsD / FucU family. RbsD subfamily. Homodecamer.

It localises to the cytoplasm. The catalysed reaction is beta-D-ribopyranose = beta-D-ribofuranose. It functions in the pathway carbohydrate metabolism; D-ribose degradation; D-ribose 5-phosphate from beta-D-ribopyranose: step 1/2. Its function is as follows. Catalyzes the interconversion of beta-pyran and beta-furan forms of D-ribose. The protein is D-ribose pyranase of Escherichia coli O6:H1 (strain CFT073 / ATCC 700928 / UPEC).